A 325-amino-acid chain; its full sequence is DNA-directed RNA polymerase subunit alpha (325 aa).

An alpha N-terminal domain (alpha-NTD) region spans residues 1-239 (MQQFLRYNIN…DHLKPLIDIN (239 aa)). An alpha C-terminal domain (alpha-CTD) region spans residues 255-325 (EKNKKLSIPI…ELYDLKLKNN (71 aa)).

The protein belongs to the RNA polymerase alpha chain family. As to quaternary structure, homodimer. The RNAP catalytic core consists of 2 alpha, 1 beta, 1 beta' and 1 omega subunit. When a sigma factor is associated with the core the holoenzyme is formed, which can initiate transcription.

The enzyme catalyses RNA(n) + a ribonucleoside 5'-triphosphate = RNA(n+1) + diphosphate. DNA-dependent RNA polymerase catalyzes the transcription of DNA into RNA using the four ribonucleoside triphosphates as substrates. The protein is DNA-directed RNA polymerase subunit alpha of Mycoplasmoides gallisepticum (strain R(low / passage 15 / clone 2)) (Mycoplasma gallisepticum).